We begin with the raw amino-acid sequence, 145 residues long: 3-hydroxyacyl-[acyl-carrier-protein] dehydratase FabZ (145 aa).

Residue histidine 49 is part of the active site.

The protein belongs to the thioester dehydratase family. FabZ subfamily.

The protein localises to the cytoplasm. The catalysed reaction is a (3R)-hydroxyacyl-[ACP] = a (2E)-enoyl-[ACP] + H2O. Functionally, involved in unsaturated fatty acids biosynthesis. Catalyzes the dehydration of short chain beta-hydroxyacyl-ACPs and long chain saturated and unsaturated beta-hydroxyacyl-ACPs. In Ehrlichia ruminantium (strain Gardel), this protein is 3-hydroxyacyl-[acyl-carrier-protein] dehydratase FabZ.